A 678-amino-acid chain; its full sequence is Serine/threonine-protein kinase PLK (678 aa).

The 288-residue stretch at 22 to 309 (YRPGKLLGKG…VKECLDHSWL (288 aa)) folds into the Protein kinase domain. Residues 28-36 (LGKGGFAYV) and Lys-51 contribute to the ATP site. Asp-145 serves as the catalytic Proton acceptor. Thr-179 and Thr-183 each carry phosphothreonine; by autocatalysis. POLO box domains lie at 435-516 (YIMS…YLEN) and 563-644 (FLKK…IIKA). Residues 658 to 678 (KDSTKKSASGSSTRQLGQGGE) are disordered. Residues 663 to 678 (KSASGSSTRQLGQGGE) are compositionally biased toward polar residues.

The protein belongs to the protein kinase superfamily. Ser/Thr protein kinase family. CDC5/Polo subfamily. In terms of assembly, interacts with Kin-13. In terms of processing, autophosphorylated. Autophosphorylation is critical for its function in cell growth, cytokinesis and formation of flagella.

Its subcellular location is the cell projection. The protein localises to the cilium. It localises to the flagellum. It is found in the cytoplasm. The protein resides in the cytoskeleton. Its subcellular location is the flagellum basal body. The protein localises to the flagellum axoneme. It localises to the spindle. It is found in the membrane. It carries out the reaction L-seryl-[protein] + ATP = O-phospho-L-seryl-[protein] + ADP + H(+). It catalyses the reaction L-threonyl-[protein] + ATP = O-phospho-L-threonyl-[protein] + ADP + H(+). Inhibited by GW843286X (GW), an ATP-competitive inhibitor. Inhibition leads to reduced growth, increased number of cells with more than four nuclei, increased number of cells with condensed nuclei, cell cycle arrest at G2/M or G1/S phase depending on the treatment time with GW, and increased length of membrane-bound portions of the caudal and anterior flagella. Functionally, involved in cell cycle. Involved in cell division. Involved in cytokinesis. Involved in flagella biogenesis and in regulation of flagella length in interphase. Involved in formation of median bodies during interphase. Phosphorylates Kin-13 in vitro. Likely regulates microtubule (MT) depolymerizing activity of Kin-13. The chain is Serine/threonine-protein kinase PLK from Giardia intestinalis (strain ATCC 50803 / WB clone C6) (Giardia lamblia).